An 82-amino-acid chain; its full sequence is Toxin GTx1-15 (82 aa).

A signal peptide spans 1-21; that stretch reads MKTSVVFVIAGLALLSVACYA. The propeptide occupies 22-46; the sequence is SELKEQSSINEVLSTIFHFEQPEER. Intrachain disulfides connect Cys-48–Cys-63, Cys-55–Cys-69, and Cys-62–Cys-76. A Phenylalanine amide modification is found at Phe-80.

Belongs to the neurotoxin 10 (Hwtx-1) family. 08 (Gtx1-15) subfamily. As to expression, expressed by the venom gland.

It is found in the secreted. Its function is as follows. Potent voltage-gated sodium channel blocker. Potently inhibits the voltage-gated sodium channels Nav1.7/SCN9A (IC(50)=0.58-10 nM). Shows a moderate activity on Nav1.1/SCN1A (IC(50)=6 nM), Nav1.2/SCN2A (IC(50)=5-128 nM), Nav1.3/SCN3A (IC(50)=20.3-170 nM), and Nav1.6/SCN8A (IC(50)=17-20.1 nM). Shows an unclear inhibition of Nav1.4/SCN4A (IC(50)=200 nM to &gt;10 uM), Nav1.5/SCN5A (IC(50)=140 nM to &gt;10 uM) and Nav1.8/SCN10A (IC(50)=68-12200 nM). Weakly blocks the low voltage-gated calcium channels Cav3.1/CACNA1G (30% inhibition of the peak current by 9.8 nM of the toxin). It shows moderate affinity for lipid bilayers. The sequence is that of Toxin GTx1-15 from Grammostola rosea (Chilean rose tarantula).